The primary structure comprises 305 residues: Maximins-S type B/C (305 aa).

The signal sequence occupies residues M1–A18. Propeptides lie at residues K19–R35 and S52–R65. Residue N83 is modified to Asparagine amide. The propeptide occupies S87 to R100. Asparagine amide is present on N118. A propeptide spanning residues S122–R135 is cleaved from the precursor. At K153 the chain carries Lysine amide. The propeptide occupies S157–R170. An Asparagine amide modification is found at N188. A propeptide spanning residues S192–R205 is cleaved from the precursor. Position 223 is an asparagine amide (N223). Residues S227–R240 constitute a propeptide that is removed on maturation. At N258 the chain carries Asparagine amide. A propeptide spanning residues S262 to R275 is cleaved from the precursor. K293 carries the post-translational modification Lysine amide. Positions S297–K305 are excised as a propeptide.

This sequence belongs to the maximin-S family. In terms of tissue distribution, expressed by the skin dorsal glands.

It is found in the secreted. In terms of biological role, maximin-S1 has no antimicrobial activity. Has no hemolytic activity. Functionally, maximin-S2 has an activity against mycoplasma but has no activity against common Gram-positive and Gram-negative bacteria nor fungi. Has no hemolytic activity. Maximin-S3 has an activity against mycoplasma but has no activity against common Gram-positive and Gram-negative bacteria nor fungi. Has no hemolytic activity. Its function is as follows. Maximin-S4 has an activity against mycoplasma but has no activity against common Gram-positive and Gram-negative bacteria nor fungi. Has no hemolytic activity. In terms of biological role, maximin-S5 has an activity against mycoplasma but has no activity against common Gram-positive and Gram-negative bacteria nor fungi. Has no hemolytic activity. This is Maximins-S type B/C from Bombina maxima (Giant fire-bellied toad).